A 129-amino-acid chain; its full sequence is Protein yippee-like (129 aa).

Residues 12–109 form the Yippee domain; sequence KIYSCKHCGT…LERFKITGPD (98 aa). Residues cysteine 16, cysteine 19, cysteine 72, and cysteine 75 each contribute to the Zn(2+) site.

Belongs to the yippee family.

This Solanum tuberosum (Potato) protein is Protein yippee-like.